The chain runs to 366 residues: Endogenous Bornavirus-like nucleoprotein 1 (366 aa).

A compositionally biased stretch (polar residues) spans 1 to 15 (MSRPRNNPQTSSPQD). The segment at 1–22 (MSRPRNNPQTSSPQDSTKDGSS) is disordered.

As to expression, expression detected by RT-PCR in a few cell lines, including OL, HEK293T and MOLT-4. Not observed in HeLa cells.

In terms of biological role, may act as an RNA-binding protein. Highly homologous to the bornavirus nucleocapsid N protein that binds viral RNA and oligomerizes. The chain is Endogenous Bornavirus-like nucleoprotein 1 (EBLN1) from Homo sapiens (Human).